A 143-amino-acid chain; its full sequence is Synuclein (143 aa).

3 consecutive repeat copies span residues 20–30 (EKTKQGVQDAA), 31–41 (EKTKQGVQDAA), and 42–52 (EKTKEGVMYVG). A 5 X 11 AA tandem repeats of [EGST]-K-T-K-[EQ]-[GQ]-[VA]-X(4) region spans residues 20-78 (EKTKQGVQDAAEKTKQGVQDAAEKTKEGVMYVGTKTKEGVVQSVNTVTEKTKEQANVVG). The 4; approximate repeat unit spans residues 53–67 (TKTKEGVVQSVNTVT). Residues 68-78 (EKTKEQANVVG) form repeat 5. Residues 113-143 (REIPAEQVAEGKQTTQEPLVEATEATEETGK) are disordered.

It belongs to the synuclein family. As to expression, nervous system tissue. Found in the electric lobe, the brain and the spinal cord.

It is found in the nucleus. Its function is as follows. May have a role in synaptic regulation or signal transduction. In Tetronarce californica (Pacific electric ray), this protein is Synuclein.